We begin with the raw amino-acid sequence, 1360 residues long: MALTFTEKKRLRKNFGRISSIIDIPNLISVQKESFVRFLQTGTEFEKMKDTGLHGVFLSVFPIHDYAGTVSLEYVSYALGEPKYDVDECLQRGMTFSAPLKVAFRLVIWDENEETGTKTVREIKEQDVYLGEIPLMTNTGTFIINGTERVIVSQMHRSPGVFFDHDRGKTHSSGKLLFSARVIPYRGSWLDFEFDPKDLLFARIDRRRKLPVTTLLRAMGMSSEQILERFYEIETFRKEGVVWQKRMVPERLMGNRLNYAIVHPESGEEIVKAKKRVTARHIKKFEELGMDWLPVSQEELIGSFVARNMSDVMGEVVIEAGAEITEEMVQYLEDGGIKEIDVLFIDGMSVGAYLRNTLALDKNSGQDEALIDIYRMMRPGEPPTVDAAKALFNNLFFNSDRYDLSTVGRLKMNSRLSLNTELHIRTLQHDDILGVVDILLKLKDGHGKVDDIDHLGNRRVRSVGELLENQVRIGLVRMERAIRERMSSAEADQLVPHDVMNSKPFSAVIREFFGSSQLSQFMDQTNPLSEITHKRRLSALGPGGMTRERAGFEVRDVHPTHYGRICPIETPEGPNIGLINSLSTYARINEFGFIESPYRQVKEGTPIDQVDFLSAIDEENYIIAQANAKLGDEASEEDALIQCRHKLEFMVATPDRVNYQDVSPKQTVSVAASLIPFLENDDANRALMGSNMQRQAVPLIKTDAPLVGTGIESVVARDSGVTITARRTGVVDEVDAARIVVKADEEPGSTEPGVDIYNLTKFSRSNQNTCINQVPLVKNGERVTAGDIIADGPSTQIGELALGRNVLVAFMPWNGYNFEDSILISERLVAEDVFTSIHIDEFEVMARDTKLGAEEITRDMPNVGEDALRNLDESGIIYVGAEVKPGDILVGKVTPKGETQLTPEEKLLRAIFGEKASDVRDTSLRLPPGVAGTVVDVRVFSRRGLEKDDRAKLIDQDEIALLRKDMAAERRIIERDADERIRNLMNGKPVRSAPGLQPGDHISQSWLDKSPSSHLRDVVLDDDAITQQIEGIRHHVEKAADRLKKRFESKVEKLERGDDLPPGVLKMVKVYIAVKRKLQPGDKMAGRHGNKGVISKINPLEDMPYMANGTPVDIVLNPLGVPSRMNVGQILETHLGWAARGMGFKIEEALKQHRKGVADVLRRQFEEIYDNTRESAEIAALSDDQLVDMAKNLQYGVPTATPVFDGAIESDISSWLNKAGLPTSGQIQLIDGRTGEPFDRHVTVGYIYMLKLHHLVDDKIHARSIGPYSLVTQQPLGGKAQFGGQRFGEMEVWALEAYGAAYTLQEMLTVKSDDVAGRTKIYESIVKGDDTFEAGVPESFNVLVKELQALALDVTLQRDD.

The protein belongs to the RNA polymerase beta chain family. In terms of assembly, the RNAP catalytic core consists of 2 alpha, 1 beta, 1 beta' and 1 omega subunit. When a sigma factor is associated with the core the holoenzyme is formed, which can initiate transcription.

It carries out the reaction RNA(n) + a ribonucleoside 5'-triphosphate = RNA(n+1) + diphosphate. DNA-dependent RNA polymerase catalyzes the transcription of DNA into RNA using the four ribonucleoside triphosphates as substrates. In Magnetococcus marinus (strain ATCC BAA-1437 / JCM 17883 / MC-1), this protein is DNA-directed RNA polymerase subunit beta.